The primary structure comprises 357 residues: 3-dehydroquinate synthase (357 aa).

Residues 104-108 (GVVGD), 128-129 (TT), lysine 141, and 168-171 (FLET) contribute to the NAD(+) site. Positions 183, 243, and 260 each coordinate Zn(2+).

Belongs to the sugar phosphate cyclases superfamily. Dehydroquinate synthase family. NAD(+) serves as cofactor. The cofactor is Co(2+). Requires Zn(2+) as cofactor.

The protein resides in the cytoplasm. It carries out the reaction 7-phospho-2-dehydro-3-deoxy-D-arabino-heptonate = 3-dehydroquinate + phosphate. The protein operates within metabolic intermediate biosynthesis; chorismate biosynthesis; chorismate from D-erythrose 4-phosphate and phosphoenolpyruvate: step 2/7. Its function is as follows. Catalyzes the conversion of 3-deoxy-D-arabino-heptulosonate 7-phosphate (DAHP) to dehydroquinate (DHQ). This Streptococcus pyogenes serotype M6 (strain ATCC BAA-946 / MGAS10394) protein is 3-dehydroquinate synthase.